A 209-amino-acid polypeptide reads, in one-letter code: Small ribosomal subunit protein uS4 (209 aa).

Residues 99–161 (CRLDNIAFRL…SSKLVVVEMG (63 aa)) enclose the S4 RNA-binding domain.

It belongs to the universal ribosomal protein uS4 family. As to quaternary structure, part of the 30S ribosomal subunit. Contacts protein S5. The interaction surface between S4 and S5 is involved in control of translational fidelity.

In terms of biological role, one of the primary rRNA binding proteins, it binds directly to 16S rRNA where it nucleates assembly of the body of the 30S subunit. Functionally, with S5 and S12 plays an important role in translational accuracy. The protein is Small ribosomal subunit protein uS4 of Acidobacterium capsulatum (strain ATCC 51196 / DSM 11244 / BCRC 80197 / JCM 7670 / NBRC 15755 / NCIMB 13165 / 161).